Reading from the N-terminus, the 977-residue chain is Mineralocorticoid receptor (977 aa).

The segment covering 1 to 19 (METKGYHSRPEGLDMERRW) has biased composition (basic and acidic residues). Disordered stretches follow at residues 1 to 37 (METKGYHSRPEGLDMERRWGQVSQPVDRPSLGPAERT) and 231 to 288 (QGTP…VSSP). The tract at residues 1-601 (METKGYHSRP…STGSSRPSKI (601 aa)) is modulating. A compositionally biased stretch (polar residues) spans 231-243 (QGTPLTCSPTVDN). Phosphoserine is present on residues Ser-250, Ser-259, Ser-283, Ser-287, and Ser-299. Residues 259-288 (SPLSSPLSSMKSPISSPPSHCSVKSPVSSP) show a composition bias toward low complexity. Disordered stretches follow at residues 305–327 (NSRCSVSSPSKANNRSTLSSPAA) and 344–368 (SGASVGSSATRDVIPSPDTHEKGAH). Zn(2+) contacts are provided by Cys-602, Cys-605, Cys-619, Cys-622, Cys-638, Cys-644, Cys-654, and Cys-657. 2 NR C4-type zinc fingers span residues 602-622 (CLVCGDGASGCHYGVVTCGSC) and 638-662 (CAGRNDCIIDKIRRKNCPACRLQKC). The nuclear receptor DNA-binding region spans 602-667 (CLVCGDGASG…RLQKCLQAGM (66 aa)). The tract at residues 668 to 718 (NLGARKSKKLGKLKGLHEEQPQQPPPPQSPEEGTTYIAPAKEPSVNTALVP) is hinge. The interval 682–703 (GLHEEQPQQPPPPQSPEEGTTY) is disordered. The NR LBD domain occupies 719 to 957 (QLSSISRALT…EFPAMLVEII (239 aa)). 21-hydroxyprogesterone-binding residues include Asn-763 and Gln-769. Aldosterone-binding residues include Asn-763 and Gln-769. Positions 763 and 769 each coordinate progesterone. Residues 775-778 (KWAK) are important for coactivator binding. 21-hydroxyprogesterone contacts are provided by Arg-810 and Thr-938. Residues Arg-810 and Thr-938 each coordinate aldosterone. Residues Arg-810 and Thr-938 each contribute to the progesterone site.

This sequence belongs to the nuclear hormone receptor family. NR3 subfamily.

The protein resides in the cytoplasm. The protein localises to the nucleus. Its function is as follows. Receptor for both mineralocorticoids (MC) such as aldosterone and glucocorticoids (GC) such as corticosterone or cortisol. Binds to mineralocorticoid response elements (MRE) and transactivates target genes. The effect of MC is to increase ion and water transport and thus raise extracellular fluid volume and blood pressure and lower potassium levels. The chain is Mineralocorticoid receptor (NR3C2) from Tupaia belangeri (Common tree shrew).